A 258-amino-acid polypeptide reads, in one-letter code: Cell division protein FtsQ (258 aa).

Over 1–29 (MAKNAPAPRGARRKPVKKVGVPLRERVAT) the chain is Cytoplasmic. A helical transmembrane segment spans residues 30-50 (AVPWMLVGSVAMVSLLAVIYL). The Periplasmic segment spans residues 51-258 (PAALDGYPIR…MAVTWREQQS (208 aa)). In terms of domain architecture, POTRA spans 57-127 (YPIRKVGVDG…DTVVLTVEER (71 aa)).

Belongs to the FtsQ/DivIB family. FtsQ subfamily. In terms of assembly, part of a complex composed of FtsB, FtsL and FtsQ.

Its subcellular location is the cell inner membrane. Essential cell division protein. May link together the upstream cell division proteins, which are predominantly cytoplasmic, with the downstream cell division proteins, which are predominantly periplasmic. May control correct divisome assembly. The chain is Cell division protein FtsQ from Alcanivorax borkumensis (strain ATCC 700651 / DSM 11573 / NCIMB 13689 / SK2).